The primary structure comprises 428 residues: Histone deacetylase 3 (428 aa).

Residues 3-316 (NRTSYFYDPD…WTFETSLLLE (314 aa)) are histone deacetylase. 1D-myo-inositol 1,4,5,6-tetrakisphosphate contacts are provided by H17, G21, and K25. Residue H135 is part of the active site. Zn(2+) is bound by residues D170, H172, and D259. 1D-myo-inositol 1,4,5,6-tetrakisphosphate is bound at residue R265. Positions 385–428 (LNYERNDEPDPDERGAEENYTRPEAANEFYDGDHDNDKESDVEI) are disordered. 2 stretches are compositionally biased toward basic and acidic residues: residues 386–405 (NYER…ENYT) and 415–428 (DGDH…DVEI).

It belongs to the histone deacetylase family. HD type 1 subfamily.

Its subcellular location is the nucleus. It localises to the chromosome. It is found in the cytoplasm. The protein resides in the cytosol. The enzyme catalyses N(6)-acetyl-L-lysyl-[histone] + H2O = L-lysyl-[histone] + acetate. Inositol tetraphosphate (1D-myo-inositol 1,4,5,6-tetrakisphosphate) promotes the histone deacetylase activity by acting as an intermolecular glue between hdac3 and N-Cor repressor complex components. In terms of biological role, responsible for the deacetylation of lysine residues on the N-terminal part of the core histones (H2A, H2B, H3 and H4). Histone deacetylation gives a tag for epigenetic repression and plays an important role in transcriptional regulation, cell cycle progression and developmental events. Histone deacetylases act via the formation of large multiprotein complexes, such as N-Cor repressor complex, which activate the histone deacetylase activity. May play a role in the regulation of the circadian clock in a deacetylase activity-independent manner. The sequence is that of Histone deacetylase 3 (hdac3) from Tetraodon nigroviridis (Spotted green pufferfish).